The primary structure comprises 900 residues: Zinc finger protein 574 (900 aa).

3 C2H2-type zinc fingers span residues 16–38 (YVCS…QNSH), 76–98 (YQCL…QELH), and 126–148 (YECV…RQTH). Ser164 bears the Phosphoserine mark. The segment at 213-235 (YKCSECSQLFQMPADFLEHQATH) adopts a C2H2-type 4 zinc-finger fold. Over residues 244–254 (AEPATQQETQV) the composition is skewed to low complexity. Residues 244–306 (AEPATQQETQ…RRNNSGESGG (63 aa)) form a disordered region. Over residues 273-290 (HSYELRNELRNGEAIGRD) the composition is skewed to basic and acidic residues. Position 301 is a phosphoserine (Ser301). 10 consecutive C2H2-type zinc fingers follow at residues 312-334 (LFCS…LRSH), 339-361 (FKCP…LGDH), 367-389 (FLCV…RRAH), 395-416 (HSCP…RRTH), 469-492 (YRCL…RFVH), 498-520 (HKCS…LRTH), 526-548 (FPCP…RLTH), 554-576 (YRCG…RLVH), 582-604 (YRCQ…RYHH), and 610-633 (YKCR…LVIH). The segment at 639–662 (YRCSSCGAAFPSSLRLREHRCAAA) adopts a C2H2-type 15; degenerate zinc-finger fold. The C2H2-type 16 zinc finger occupies 670–692 (FECGTCGKKVGSAARLQAHEAAH). The tract at residues 690–741 (AAHAAAGPGEVLAKEPPAPRASRATRTPVAPSPTALSGTTSAAPAAPARRRG) is disordered. Ser721 is subject to Phosphoserine. Positions 721–736 (SPTALSGTTSAAPAAP) are enriched in low complexity. Position 728 is a phosphothreonine (Thr728). 4 C2H2-type zinc fingers span residues 742–764 (PECS…RRIH), 770–792 (YPCP…RRLH), 798–820 (FACE…RRIH), and 826–848 (YSCP…RKTH). An Asymmetric dimethylarginine modification is found at Arg836.

This sequence belongs to the krueppel C2H2-type zinc-finger protein family.

The protein localises to the nucleus. May be involved in transcriptional regulation. This Mus musculus (Mouse) protein is Zinc finger protein 574 (Znf574).